Here is a 221-residue protein sequence, read N- to C-terminus: Chalcone--flavanone isomerase (221 aa).

Residues Thr-47, Asn-112, and Ser-189 each contribute to the substrate site.

Belongs to the chalcone isomerase family.

The catalysed reaction is a chalcone = a flavanone.. It functions in the pathway secondary metabolite biosynthesis; flavonoid biosynthesis. Its function is as follows. Catalyzes the intramolecular cyclization of bicyclic chalcones into tricyclic (S)-flavanones. Responsible for the isomerization of 4,2',4',6'-tetrahydroxychalcone (also termed chalcone) into naringenin. This Dianthus caryophyllus (Carnation) protein is Chalcone--flavanone isomerase (CHI).